Here is a 123-residue protein sequence, read N- to C-terminus: Ribonuclease P protein component (123 aa).

It belongs to the RnpA family. In terms of assembly, consists of a catalytic RNA component (M1 or rnpB) and a protein subunit.

It catalyses the reaction Endonucleolytic cleavage of RNA, removing 5'-extranucleotides from tRNA precursor.. In terms of biological role, RNaseP catalyzes the removal of the 5'-leader sequence from pre-tRNA to produce the mature 5'-terminus. It can also cleave other RNA substrates such as 4.5S RNA. The protein component plays an auxiliary but essential role in vivo by binding to the 5'-leader sequence and broadening the substrate specificity of the ribozyme. This chain is Ribonuclease P protein component, found in Bordetella bronchiseptica (strain ATCC BAA-588 / NCTC 13252 / RB50) (Alcaligenes bronchisepticus).